The chain runs to 322 residues: Ferrochelatase (322 aa).

His194 and Glu275 together coordinate Fe cation.

Belongs to the ferrochelatase family.

The protein localises to the cytoplasm. It carries out the reaction heme b + 2 H(+) = protoporphyrin IX + Fe(2+). Its pathway is porphyrin-containing compound metabolism; protoheme biosynthesis; protoheme from protoporphyrin-IX: step 1/1. Its function is as follows. Catalyzes the ferrous insertion into protoporphyrin IX. The protein is Ferrochelatase of Proteus mirabilis (strain HI4320).